A 167-amino-acid chain; its full sequence is Small heat shock protein C1 (167 aa).

Residues 59-167 enclose the sHSP domain; that stretch reads PLYESNSIKS…EQDAREITIN (109 aa).

Belongs to the small heat shock protein (HSP20) family.

In Rickettsia felis (strain ATCC VR-1525 / URRWXCal2) (Rickettsia azadi), this protein is Small heat shock protein C1 (hspC1).